The chain runs to 495 residues: Histidine--tRNA ligase (495 aa).

It belongs to the class-II aminoacyl-tRNA synthetase family. As to quaternary structure, homodimer.

It localises to the cytoplasm. The catalysed reaction is tRNA(His) + L-histidine + ATP = L-histidyl-tRNA(His) + AMP + diphosphate + H(+). The protein is Histidine--tRNA ligase of Ruegeria pomeroyi (strain ATCC 700808 / DSM 15171 / DSS-3) (Silicibacter pomeroyi).